A 106-amino-acid polypeptide reads, in one-letter code: Large ribosomal subunit protein bL21 (106 aa).

The protein belongs to the bacterial ribosomal protein bL21 family. In terms of assembly, part of the 50S ribosomal subunit. Contacts protein L20.

This protein binds to 23S rRNA in the presence of protein L20. This is Large ribosomal subunit protein bL21 from Xanthomonas oryzae pv. oryzae (strain MAFF 311018).